Here is a 242-residue protein sequence, read N- to C-terminus: Polycomb group RING finger protein 3 (242 aa).

The segment at 17–56 adopts an RING-type zinc-finger fold; that stretch reads CRLCSGYLIDATTVTECLHTFCRSCLVKYLEENNTCPTCR. Positions 115 to 149 are disordered; that stretch reads AKQHLDPHRNGETKADDSSNKEAAEEKQEEDGDYH. Over residues 117–140 the composition is skewed to basic and acidic residues; sequence QHLDPHRNGETKADDSSNKEAAEE. The interval 132–242 is interaction with BCORL1; that stretch reads SSNKEAAEEK…LHYRPKMDLL (111 aa).

As to quaternary structure, component of a PRC1-like complex that contains PCGF3, RNF2 and RYBP. Interacts with CBX6, CBX7 and CBX8. Interacts with BCORL1.

It is found in the nucleus. It localises to the nucleoplasm. Its function is as follows. Component of a Polycomb group (PcG) multiprotein PRC1-like complex, a complex class required to maintain the transcriptionally repressive state of many genes, including Hox genes, throughout development. PcG PRC1 complex acts via chromatin remodeling and modification of histones; it mediates monoubiquitination of histone H2A 'Lys-119', rendering chromatin heritably changed in its expressibility. Within the PRC1-like complex, regulates RNF2 ubiquitin ligase activity. Plays a redundant role with PCGF5 as part of a PRC1-like complex that mediates monoubiquitination of histone H2A 'Lys-119' on the X chromosome and is required for normal silencing of one copy of the X chromosome in XX females. This is Polycomb group RING finger protein 3 (PCGF3) from Bos taurus (Bovine).